The primary structure comprises 681 residues: Potassium-transporting ATPase ATP-binding subunit (681 aa).

The next 4 membrane-spanning stretches (helical) occupy residues 37–57 (MFVV…PTYF), 64–84 (VGYN…ANFA), 218–238 (IALT…VMTL), and 255–275 (IALL…AIGI). Asp-306 functions as the 4-aspartylphosphate intermediate in the catalytic mechanism. ATP contacts are provided by residues Asp-343, Glu-347, 375–382 (FSAETRMS), and Lys-394. The Mg(2+) site is built by Asp-517 and Asp-521. 3 consecutive transmembrane segments (helical) span residues 573 to 595 (ALTT…AIIS), 615 to 635 (AILS…PIAM), and 655 to 675 (IYGL…DMII).

It belongs to the cation transport ATPase (P-type) (TC 3.A.3) family. Type IA subfamily. In terms of assembly, the system is composed of three essential subunits: KdpA, KdpB and KdpC.

Its subcellular location is the cell membrane. The catalysed reaction is K(+)(out) + ATP + H2O = K(+)(in) + ADP + phosphate + H(+). Part of the high-affinity ATP-driven potassium transport (or Kdp) system, which catalyzes the hydrolysis of ATP coupled with the electrogenic transport of potassium into the cytoplasm. This subunit is responsible for energy coupling to the transport system and for the release of the potassium ions to the cytoplasm. In Caldanaerobacter subterraneus subsp. tengcongensis (strain DSM 15242 / JCM 11007 / NBRC 100824 / MB4) (Thermoanaerobacter tengcongensis), this protein is Potassium-transporting ATPase ATP-binding subunit.